The following is a 726-amino-acid chain: Transmembrane channel-like protein 8 (726 aa).

Residues 1–114 lie on the Cytoplasmic side of the membrane; it reads MLLPRSVSSE…GIRSYFTFLR (114 aa). Ser6 is subject to Phosphoserine. A helical membrane pass occupies residues 115 to 135; it reads FLLLLNLLSLLLTASFVLLPL. The Lumenal portion of the chain corresponds to 136-200; it reads VWLRPPDPGP…VGPESSSVYS (65 aa). An N-linked (GlcNAc...) asparagine glycan is attached at Asn148. The helical transmembrane segment at 201–221 threads the bilayer; that stretch reads IRLAYLLSPLACLLLCFCGTL. Over 222–299 the chain is Cytoplasmic; it reads RRMVKGLPQK…AQTACRLLSY (78 aa). Residues 300–320 traverse the membrane as a helical segment; sequence LRVNVLNGLLVVGAISAIFWA. Residues 321–338 are Lumenal-facing; that stretch reads TKYSQDNKEESLFLLLQY. The helical transmembrane segment at 339–359 threads the bilayer; it reads LPPGVIALVNFLGPLLFTFLV. Topologically, residues 360-426 are cytoplasmic; sequence QLENYPPNTE…QCWENSVGEE (67 aa). The tract at residues 362 to 530 is TMC domain; the sequence is ENYPPNTEVN…SSRPFRASSS (169 aa). A helical membrane pass occupies residues 427 to 447; the sequence is LYKLSIFNFLLTVAFAFLVTL. Residues 448 to 488 lie on the Lumenal side of the membrane; sequence PRRLLVDRFSGRFWAWLEREEFLVPKNVLDIVAGQTVTWMG. Residues 489–509 form a helical membrane-spanning segment; sequence LFYCPLLPLLNSVFLFLTFYI. Residues 510-531 lie on the Cytoplasmic side of the membrane; it reads KKYTLLKNSRASSRPFRASSST. The helical transmembrane segment at 532–552 threads the bilayer; the sequence is FFFQLVLLLGLLLAAVPLGYV. Over 553–594 the chain is Lumenal; the sequence is VSSIHSSWDCGLFTNYSAPWQVVPELVALGLPPIGQRALHYL. N-linked (GlcNAc...) asparagine glycosylation is present at Asn567. The helical transmembrane segment at 595–615 threads the bilayer; it reads GSHAFSFPLLIMLSLVLTVCV. Residues 616–726 are Cytoplasmic-facing; that stretch reads SQTQANARAI…RFRFPSGAEL (111 aa). Positions 651-726 are disordered; it reads PEPGPSDSPG…RFRFPSGAEL (76 aa). Over residues 652–662 the composition is skewed to pro residues; that stretch reads EPGPSDSPGPK. 2 positions are modified to phosphoserine: Ser658 and Ser673.

This sequence belongs to the TMC family. In terms of assembly, interacts with TMC6. Interacts and forms a complex with TMC6 and CIB1; the interaction stabilizes each component of the complex. Interacts and forms a complex with TMC6 and SLC30A1/ZNT1; the interaction regulates zinc transport into the ER. Interacts with TRADD; the interaction competes with TRADD/RIPK1/TRAF2/cIAPs complex I formation and facilites complex II formation. As to quaternary structure, (Microbial infection) Interacts with human papillomavirus 16/HPV16 protein E5; the interaction alleviates TMC8-mediated transcription factors inhibition. In terms of tissue distribution, expressed in placenta, prostate and testis.

The protein resides in the endoplasmic reticulum membrane. It is found in the golgi apparatus membrane. Its subcellular location is the nucleus membrane. In terms of biological role, acts as a regulatory protein involved in the regulation of numerous cellular processes. Together with its homolog TMC6/EVER1, forms a complex with calcium-binding protein CIB1 in lymphocytes and keratynocytes where TMC6 and TMC8 stabilize CIB1 levels and reciprocally. Together with TMC6, also forms a complex with and activates zinc transporter ZNT1 at the ER membrane of keratynocytes, thereby facilitating zinc uptake into the ER. Also inhibits receptor-mediated calcium release from ER stores and calcium activated and volume regulated chloride channels. Down-regulates the activity of transcription factors induced by zinc and cytokines. Also sequesters TRADD which impairs the recruitment of TRAF2 and RIPK1 in the pro-survival complex I and promotes proapoptotic complex II formation, and may therefore be involved in TNF-induced cell death/survival decisions. The chain is Transmembrane channel-like protein 8 from Homo sapiens (Human).